The chain runs to 445 residues: Glycine--tRNA ligase (445 aa).

The substrate site is built by Arg97 and Glu145. ATP contacts are provided by residues 177-179, 187-192, 262-263, and 308-311; these read RNE, FRTCEF, EI, and GLTR. 192-196 contributes to the substrate binding site; that stretch reads FEQME. Substrate is bound at residue 304 to 308; that stretch reads ETSAG.

Belongs to the class-II aminoacyl-tRNA synthetase family. As to quaternary structure, homodimer.

It is found in the cytoplasm. It catalyses the reaction tRNA(Gly) + glycine + ATP = glycyl-tRNA(Gly) + AMP + diphosphate. Its function is as follows. Catalyzes the attachment of glycine to tRNA(Gly). The polypeptide is Glycine--tRNA ligase (Borreliella afzelii (strain PKo) (Borrelia afzelii)).